A 227-amino-acid chain; its full sequence is Urease accessory protein UreE (227 aa).

The segment at 192–227 (PHGSGLHVHAIHSHGHSHSHDHDHDHNHDHDHKHKQ) is disordered. The span at 209 to 221 (HSHDHDHDHNHDH) shows a compositional bias: basic and acidic residues.

It belongs to the UreE family.

The protein localises to the cytoplasm. Involved in urease metallocenter assembly. Binds nickel. Probably functions as a nickel donor during metallocenter assembly. The chain is Urease accessory protein UreE from Yersinia bercovieri.